The sequence spans 772 residues: uncharacterized protein (772 aa).

A run of 2 helical transmembrane segments spans residues 16-36 and 301-321; these read LITFFCLLSTIPVILVGLFSY and IGWITFAVCLILLTLSLLFSW. The HTH araC/xylS-type domain occupies 670–768; the sequence is DNIIHIIHHE…GITPGNYRQQ (99 aa). 2 consecutive DNA-binding regions (H-T-H motif) follow at residues 687 to 708 and 735 to 758; these read DEIARRLHYNPNYLSSIFKKEM and VKDIAEKLKYKNSQNFIRSFKKLE.

It is found in the cell membrane. This is an uncharacterized protein from Bacillus subtilis (strain 168).